The primary structure comprises 313 residues: Small glutamine-rich tetratricopeptide repeat-containing protein alpha (313 aa).

The segment at Lys-69–Glu-97 is disordered. At Ser-77 the chain carries Phosphoserine. Phosphothreonine is present on Thr-81. Ser-84 is subject to Phosphoserine. TPR repeat units follow at residues Ala-91–Asn-124, Ala-125–Tyr-158, and Ser-159–Asn-192. Position 137 is an N6-acetyllysine (Lys-137). Ser-301 is modified (phosphoserine). Thr-303 bears the Phosphothreonine mark. At Ser-305 the chain carries Phosphoserine.

It belongs to the SGT family. In terms of assembly, homodimer. Homooligomer. Interacts with DNAJC5 and DNAJC5B. Interacts (via TPR repeats) with HSP90AA1. Interacts (via Gln-rich region) with SLC2A1. Interacts with HSP90AB1. Interacts (via TPR repeats) with HSPA8/Hsc70; the interaction is direct. Interacts with BAG6 (via ubiquitin-like domain); interaction prevents interaction between BAG6 and RNF126. Forms a multiprotein complex, at least composed of DNAJB12, DNAJB14, HSPA8/Hsc70 and SGTA; interaction with DNAJB14 and HSPA8/Hsc70 is direct.

Its subcellular location is the cytoplasm. It localises to the nucleus. In terms of biological role, co-chaperone that binds misfolded and hydrophobic patches-containing client proteins in the cytosol. Mediates their targeting to the endoplasmic reticulum but also regulates their sorting to the proteasome when targeting fails. Functions in tail-anchored/type II transmembrane proteins membrane insertion constituting with ASNA1 and the BAG6 complex a targeting module. Functions upstream of the BAG6 complex and ASNA1, binding more rapidly the transmembrane domain of newly synthesized proteins. It is also involved in the regulation of the endoplasmic reticulum-associated misfolded protein catabolic process via its interaction with BAG6: collaborates with the BAG6 complex to maintain hydrophobic substrates in non-ubiquitinated states. Competes with RNF126 for interaction with BAG6, preventing the ubiquitination of client proteins associated with the BAG6 complex. Binds directly to HSC70 and HSP70 and regulates their ATPase activity. The chain is Small glutamine-rich tetratricopeptide repeat-containing protein alpha (SGTA) from Bos taurus (Bovine).